The following is a 142-amino-acid chain: Large ribosomal subunit protein uL11 (142 aa).

The protein belongs to the universal ribosomal protein uL11 family. Part of the ribosomal stalk of the 50S ribosomal subunit. Interacts with L10 and the large rRNA to form the base of the stalk. L10 forms an elongated spine to which L12 dimers bind in a sequential fashion forming a multimeric L10(L12)X complex. One or more lysine residues are methylated.

Its function is as follows. Forms part of the ribosomal stalk which helps the ribosome interact with GTP-bound translation factors. In Shewanella amazonensis (strain ATCC BAA-1098 / SB2B), this protein is Large ribosomal subunit protein uL11.